The sequence spans 289 residues: UPF0761 membrane protein ESA_04062 (289 aa).

The next 6 membrane-spanning stretches (helical) occupy residues 44–64 (LLSLVPFVAVIFALFAAFPMF), 104–124 (VGALGLIVTSLLLMYAIDSAL), 140–160 (FAVYWMILTLGPLLAGASLVI), 183–203 (IFPLLLSWLSFWLLYSVVPTT), 215–235 (LVAALLFELGKKGFALYITMF), and 244–264 (VLAVIPILFLWVYWTWCIVLL).

This sequence belongs to the UPF0761 family.

The protein resides in the cell inner membrane. This is UPF0761 membrane protein ESA_04062 from Cronobacter sakazakii (strain ATCC BAA-894) (Enterobacter sakazakii).